The sequence spans 257 residues: NH(3)-dependent NAD(+) synthetase (257 aa).

40–47 (GISGGIDS) is a binding site for ATP. D46 serves as a coordination point for Mg(2+). R121 lines the deamido-NAD(+) pocket. T141 provides a ligand contact to ATP. E146 is a binding site for Mg(2+). Residues K154 and D161 each coordinate deamido-NAD(+). ATP is bound by residues K170 and S192. A deamido-NAD(+)-binding site is contributed by 238 to 239 (HK).

This sequence belongs to the NAD synthetase family. As to quaternary structure, homodimer.

The enzyme catalyses deamido-NAD(+) + NH4(+) + ATP = AMP + diphosphate + NAD(+) + H(+). It functions in the pathway cofactor biosynthesis; NAD(+) biosynthesis; NAD(+) from deamido-NAD(+) (ammonia route): step 1/1. Its function is as follows. Catalyzes the ATP-dependent amidation of deamido-NAD to form NAD. Uses ammonia as a nitrogen source. The protein is NH(3)-dependent NAD(+) synthetase of Mycoplasmopsis pulmonis (strain UAB CTIP) (Mycoplasma pulmonis).